The following is a 778-amino-acid chain: uncharacterized protein (778 aa).

A PE domain is found at 1 to 92 (MSFVIAVPEA…GARSYVVAEA (92 aa)). Disordered regions lie at residues 125–163 (ADGT…AGLI), 372–510 (TGLA…GDAF), and 718–778 (QGGL…GADG). Gly residues-rich tracts occupy residues 402–429 (NQTG…GGLG), 436–510 (DGTG…GDAF), and 718–763 (QGGL…GSSG).

The protein belongs to the mycobacterial PE family. PGRS subfamily.

This is an uncharacterized protein from Mycobacterium tuberculosis (strain CDC 1551 / Oshkosh).